The following is a 186-amino-acid chain: Small ribosomal subunit protein uS5 (186 aa).

The S5 DRBM domain maps to 20 to 83; it reads FVDKLVHINR…EAAKRDMIFV (64 aa).

It belongs to the universal ribosomal protein uS5 family. Part of the 30S ribosomal subunit. Contacts proteins S4 and S8.

In terms of biological role, with S4 and S12 plays an important role in translational accuracy. Located at the back of the 30S subunit body where it stabilizes the conformation of the head with respect to the body. This Brucella abortus (strain S19) protein is Small ribosomal subunit protein uS5.